A 562-amino-acid chain; its full sequence is Protein wntless (562 aa).

At 1–13 the chain is on the cytoplasmic side; it reads MSGTILENLSGRK. Residues 14–34 traverse the membrane as a helical segment; sequence LSILVASLLLCQVFCFLLGGL. Over 35–239 the chain is Lumenal; that stretch reads YAPLPAGHVT…AIHQNGGFTQ (205 aa). The N-linked (GlcNAc...) asparagine glycan is linked to N58. Residues 240-260 traverse the membrane as a helical segment; sequence IWLMLKTVLFPFVVGIMIWFW. The Cytoplasmic portion of the chain corresponds to 261 to 270; sequence RRVHLLQRSP. Residues 271–291 traverse the membrane as a helical segment; sequence ALLEYMLIYLGGALTFLNLPL. Topologically, residues 292 to 311 are lumenal; sequence EYLSLVVEMPYMLLLSDIRQ. A helical transmembrane segment spans residues 312 to 332; sequence GIFYAMLLSFWLVFAGEHMLI. The Cytoplasmic segment spans residues 333–344; it reads QDAPNKSTIRSR. The chain crosses the membrane as a helical span at residues 345-365; that stretch reads YWKHLSAVVVGCISLFVFDIC. Topologically, residues 366 to 390 are lumenal; that stretch reads ERGVQLRNPFYSIWTTPLGAKVAMT. A helical transmembrane segment spans residues 391 to 411; sequence FIILAGVSAAIYFLFLCYMIW. Over 412–441 the chain is Cytoplasmic; that stretch reads KVFRNIGDKRTSLPSMSQARRLHYEGLIYR. Residues 442 to 462 form a helical membrane-spanning segment; it reads FKFLMLATLLCAALTVAGFIM. The Lumenal segment spans residues 463–482; sequence GQMAEGQWQWNDNVEIQLTS. A helical membrane pass occupies residues 483-503; the sequence is AFLTGVYGMWNIYIFALLILY. Topologically, residues 504–562 are cytoplasmic; the sequence is APSHKQWPTMHHSDETTQSNENIVASAASEEIEFSHLPSDSNPSEISSLTSFTRKVAFD. The segment at 539-562 is disordered; it reads HLPSDSNPSEISSLTSFTRKVAFD. The span at 541–556 shows a compositional bias: polar residues; the sequence is PSDSNPSEISSLTSFT.

The protein belongs to the wntless family. In terms of assembly, interacts with wg; in the Golgi. Interacts with Vps35, a component of the retromer complex; wls stability is regulated by Vps35.

The protein localises to the presynaptic cell membrane. It localises to the postsynaptic cell membrane. Its subcellular location is the cell membrane. The protein resides in the endoplasmic reticulum membrane. It is found in the endosome membrane. The protein localises to the golgi apparatus membrane. Its function is as follows. A segment polarity gene required for wingless (wg)-dependent patterning processes, acting in both wg-sending cells and wg-target cells. In non-neuronal cells wls directs wg secretion. The wls traffic loop encompasses the Golgi, the cell surface, an endocytic compartment and a retrograde route leading back to the Golgi, and involves clathrin-mediated endocytosis and the retromer complex (a conserved protein complex consisting of Vps35 and Vps26). In neuronal cells (the larval motorneuron NMJ), the wg signal moves across the synapse via the release of wls-containing exosome-like vesicles. Postsynaptic wls is required for the trafficking of fz2 through the fz2-interacting protein Grip. The protein is Protein wntless of Drosophila ananassae (Fruit fly).